Consider the following 374-residue polypeptide: Translocating chain-associated membrane protein 1 (374 aa).

Residues 1 to 29 (MAIRKKSTKSPPVLSHEFVLQNHADIVSC) are Cytoplasmic-facing. The helical transmembrane segment at 30-50 (VAMVFLLGLMFEITAKASIIF) threads the bilayer. The Lumenal segment spans residues 51–76 (VTLQYNVTLPATEEQATESASLYYYG). The N-linked (GlcNAc...) asparagine glycan is linked to asparagine 56. The chain crosses the membrane as a helical span at residues 77-97 (IKDLATVFFYMLVAIIIHAVI). Topologically, residues 98–121 (QEYMLDKINRRMHFSKTKHSKFNE) are cytoplasmic. Residues 117–326 (SKFNESGQLS…NFQLRRWREH (210 aa)) form the TLC domain. The chain crosses the membrane as a helical span at residues 122–142 (SGQLSAFYLFACVWGTFILIS). Residues 143 to 159 (ENYISDPTILWRAYPHN) lie on the Lumenal side of the membrane. Residues 160 to 180 (LMTFQMKFFYISQLAYWLHAF) form a helical membrane-spanning segment. At 181–192 (PELYFQKTKRED) the chain is on the cytoplasmic side. The chain crosses the membrane as a helical span at residues 193–213 (IPRQLVYIGLYLFHIAGAYLL). Position 214 (asparagine 214) is a topological domain, lumenal. Residues 215–235 (LNHLGLVLLVLHYFVEFLFHI) form a helical membrane-spanning segment. The Cytoplasmic portion of the chain corresponds to 236–251 (SRLFYFSNEKYQKGFS). Residues 252–272 (LWAVLFVLGRLLTLILSVLTV) form a helical membrane-spanning segment. The Lumenal segment spans residues 273 to 297 (GFGLARAENQKLDFSTGNFNVLAVR). Residues 298–318 (IAVLASICITQAFMVWKFINF) traverse the membrane as a helical segment. Residues 319 to 374 (QLRRWREHSAFQAPAVKKKPTVTKGRSSKKGTENGVNGTLTSNVADSPRNKKEKSS) lie on the Cytoplasmic side of the membrane. Residues 334–347 (VKKKPTVTKGRSSK) are compositionally biased toward basic residues. The interval 334 to 374 (VKKKPTVTKGRSSKKGTENGVNGTLTSNVADSPRNKKEKSS) is disordered. The span at 352–363 (NGVNGTLTSNVA) shows a compositional bias: polar residues. Serine 365 is modified (phosphoserine).

This sequence belongs to the TRAM family. In terms of assembly, interacts with SEC61B. May interact with Derlin-1/DERL1. N-glycosylated.

It localises to the endoplasmic reticulum membrane. In terms of biological role, involved in the translocation of nascent protein chains into or through the endoplasmic reticulum (ER) membrane by facilitating the proper chain positioning at the SEC61 channel. Regulates the exposure of nascent secretory protein chain to the cytosol during translocation into the ER. May affect the phospholipid bilayer in the vicinity of the lateral gate of the SEC61 channel, thereby facilitating ER protein transport. Intimately associates with transmembrane (TM) domain of nascent membrane proteins during the entire integration process into the ER membrane. Associates with the second TM domain of G-protein-coupled receptor opsin/OPSD nascent chain in the ER membrane, which may facilitate its integration into the membrane. Under conditions of ER stress, participates in the disposal of misfolded ER membrane proteins during the unfolded protein response (UPR), an integrated stress response (ISR) pathway, by selectively retrotranslocating misfolded ER-membrane proteins from the ER into the cytosol where they are ubiquitinated and degraded by the proteasome. In Pongo abelii (Sumatran orangutan), this protein is Translocating chain-associated membrane protein 1 (TRAM1).